Here is a 269-residue protein sequence, read N- to C-terminus: Phosphate import ATP-binding protein PstB (269 aa).

Residues 22–264 (IKVKNVDFFY…PANKKTEDYI (243 aa)) form the ABC transporter domain. 55–62 (GSSGSGKS) contacts ATP.

It belongs to the ABC transporter superfamily. Phosphate importer (TC 3.A.1.7) family. The complex is composed of two ATP-binding proteins (PstB), two transmembrane proteins (PstC and PstA) and a solute-binding protein (PstS).

The protein resides in the cell membrane. It carries out the reaction phosphate(out) + ATP + H2O = ADP + 2 phosphate(in) + H(+). Its function is as follows. Part of the ABC transporter complex PstSACB involved in phosphate import. Responsible for energy coupling to the transport system. This Spiroplasma kunkelii protein is Phosphate import ATP-binding protein PstB.